A 1005-amino-acid chain; its full sequence is Ephrin type-A receptor 8 (1005 aa).

Residues 1-27 (MAPARGRLPPALWVVTAAAAAATCVSA) form the signal peptide. The Extracellular portion of the chain corresponds to 28-542 (ARGEVNLLDT…KPRPRYDTRT (515 aa)). The Eph LBD domain occupies 31–209 (EVNLLDTSTI…YYKKCPAMVR (179 aa)). 2 consecutive Fibronectin type-III domains span residues 328–438 (PPSA…TNQA) and 439–534 (APSQ…TGKP). Residues Asn340, Asn407, and Asn432 are each glycosylated (N-linked (GlcNAc...) asparagine). Residues 543–563 (IVWICLTLITGLVVLLLLLIC) traverse the membrane as a helical segment. Residues 564–570 (KKRHCGY) are mediates interaction with ANKS1A and ANKS1B. Residues 564 to 1005 (KKRHCGYSKA…TSTQGPRRHL (442 aa)) lie on the Cytoplasmic side of the membrane. A mediates interaction with PIK3CG and required for endocytosis region spans residues 589–644 (APPPVFLPLHHPPGKLPEPQFYAEPHTYEEPGRAGRSFTREIEASRIHIEKIIGSG). Position 616 is a phosphotyrosine; by autocatalysis (Tyr616). Residues 635–896 (IHIEKIIGSG…QIVSVLDALI (262 aa)) enclose the Protein kinase domain. ATP contacts are provided by residues 641–649 (IGSGDSGEV) and Lys667. Residue Asp760 is the Proton acceptor of the active site. Phosphotyrosine; by autocatalysis is present on Tyr839. In terms of domain architecture, SAM spans 930–994 (GGGLTVGDWL…LGSIQTMRAQ (65 aa)). The PDZ-binding signature appears at 1003-1005 (RHL).

This sequence belongs to the protein kinase superfamily. Tyr protein kinase family. Ephrin receptor subfamily. Heterotetramer upon binding of the ligand. The heterotetramer is composed of an ephrin dimer and a receptor dimer. Oligomerization is probably required to induce biological responses. May also form heterodimers with other ephrin receptors. Interacts with FYN; possible downstream effector of EPHA8 in regulation of cell adhesion. Interacts with PIK3CG; regulates integrin-mediated cell adhesion to substrate. Interacts with TIAM1; regulates clathrin-mediated endocytosis of EPHA8. Interacts with ANKS1A and ANKS1B; EPHA8 kinase activity-independent but stimulated by EPHA8 ubiquitination. In terms of processing, phosphorylated. Phosphorylation is stimulated upon binding of its ligands including EFNA2, EFNA3 and EFNA5. Autophosphorylation on Tyr-616 is critical for association with FYN. Autophosphorylation on Tyr-839 modulates tyrosine kinase activity. Ubiquitinated. Ubiquitination by CBL regulates the receptor stability and activity through proteasomal degradation. ANKS1A prevents ubiquitination and degradation.

The protein localises to the cell membrane. It is found in the cell projection. Its subcellular location is the early endosome membrane. It carries out the reaction L-tyrosyl-[protein] + ATP = O-phospho-L-tyrosyl-[protein] + ADP + H(+). Functionally, receptor tyrosine kinase which binds promiscuously GPI-anchored ephrin-A family ligands residing on adjacent cells, leading to contact-dependent bidirectional signaling into neighboring cells. The signaling pathway downstream of the receptor is referred to as forward signaling while the signaling pathway downstream of the ephrin ligand is referred to as reverse signaling. The GPI-anchored ephrin-A EFNA2, EFNA3, and EFNA5 are able to activate EPHA8 through phosphorylation. With EFNA5 may regulate integrin-mediated cell adhesion and migration on fibronectin substrate but also neurite outgrowth. During development of the nervous system also plays a role in axon guidance. Downstream effectors of the EPHA8 signaling pathway include FYN which promotes cell adhesion upon activation by EPHA8 and the MAP kinases in the stimulation of neurite outgrowth. The polypeptide is Ephrin type-A receptor 8 (EPHA8) (Homo sapiens (Human)).